The sequence spans 260 residues: 3'-5' ssDNA/RNA exonuclease TatD (260 aa).

3 residues coordinate a divalent metal cation: E92, H128, and H153.

The protein belongs to the metallo-dependent hydrolases superfamily. TatD-type hydrolase family. TatD subfamily. In terms of assembly, monomer. It depends on Mg(2+) as a cofactor.

It is found in the cytoplasm. 3'-5' exonuclease that prefers single-stranded DNA and RNA. May play a role in the H(2)O(2)-induced DNA damage repair. This is 3'-5' ssDNA/RNA exonuclease TatD from Pantoea sp. (strain At-9b).